Consider the following 107-residue polypeptide: MILKILAKKHVKDVLKLLNSKDMYFSELQKTLNLHPKILDSILSDLVNEGFVEKREGESPYKFGKVYYSITPRGKRALEILDLIETFDTLREGQDIVINYKIVNSTA.

This is an uncharacterized protein from Methanocaldococcus jannaschii (strain ATCC 43067 / DSM 2661 / JAL-1 / JCM 10045 / NBRC 100440) (Methanococcus jannaschii).